The chain runs to 315 residues: Methionyl-tRNA formyltransferase (315 aa).

113–116 (SILP) serves as a coordination point for (6S)-5,6,7,8-tetrahydrofolate.

Belongs to the Fmt family.

It carries out the reaction L-methionyl-tRNA(fMet) + (6R)-10-formyltetrahydrofolate = N-formyl-L-methionyl-tRNA(fMet) + (6S)-5,6,7,8-tetrahydrofolate + H(+). Its function is as follows. Attaches a formyl group to the free amino group of methionyl-tRNA(fMet). The formyl group appears to play a dual role in the initiator identity of N-formylmethionyl-tRNA by promoting its recognition by IF2 and preventing the misappropriation of this tRNA by the elongation apparatus. This chain is Methionyl-tRNA formyltransferase, found in Vibrio cholerae serotype O1 (strain ATCC 39541 / Classical Ogawa 395 / O395).